The chain runs to 605 residues: LysM domain receptor-like kinase 10 (605 aa).

Positions 1-20 (MFSLPALLIGACAFAAAAVA) are cleaved as a signal peptide. At 21–245 (ASGDGCRAGC…GMGNSLSGGA (225 aa)) the chain is on the extracellular side. 3 cysteine pairs are disulfide-bonded: C26–C89, C30–C161, and C87–C159. N-linked (GlcNAc...) asparagine glycosylation occurs at N44. Chitin is bound by residues 115-121 (GGDTYDA) and 142-148 (PPGRIPG). Residues N154 and N158 are each glycosylated (N-linked (GlcNAc...) asparagine). A LysM domain is found at 174 to 221 (LTYPLWDGETLESVAAQYGFSSPAEMELIRRYNPGMGGVSGKGIVFIP). An N-linked (GlcNAc...) asparagine glycan is attached at N226. The chain crosses the membrane as a helical span at residues 246–266 (IAGIVIACIAIFIVAIWLIIM). Over 267-605 (FYRWQKFRKA…DLRDMDYHPF (339 aa)) the chain is Cytoplasmic. At S278 the chain carries Phosphoserine. Residues 317 to 591 (FSMEHKIGQG…RSVVVALMAL (275 aa)) enclose the Protein kinase domain. ATP contacts are provided by residues 323 to 331 (IGQGGFGSV) and K344. The Proton acceptor role is filled by D436.

The protein belongs to the protein kinase superfamily. Ser/Thr protein kinase family.

The protein resides in the cell membrane. It catalyses the reaction L-seryl-[protein] + ATP = O-phospho-L-seryl-[protein] + ADP + H(+). The catalysed reaction is L-threonyl-[protein] + ATP = O-phospho-L-threonyl-[protein] + ADP + H(+). The chain is LysM domain receptor-like kinase 10 from Oryza sativa subsp. japonica (Rice).